Here is a 389-residue protein sequence, read N- to C-terminus: Probable nitrate transporter NarT (389 aa).

A run of 12 helical transmembrane segments spans residues 14 to 34 (TLSLVVGFMAWSIIAPLMPFI), 45 to 65 (ISIILAIPVILGSVLRVPFGY), 69 to 89 (IVGAKWVFFTSFIVLLFPIFF), 97 to 117 (GMLMASGFFLGVGGAIFSVGV), 139 to 159 (GNIGTAVSSFLAPPIAGIIGW), 161 to 181 (TTVRSYLIIIALFALIMFIFG), 211 to 231 (WYFITFGAFVAFGIFLPNYLV), 246 to 266 (GVFIALATFLRPIGGILGDKF), 268 to 288 (AVKVLMIDFVVMIIGAIILGI), 294 to 314 (LFTVGCLTISICAGIGNGLIF), 331 to 351 (IVSMMGGLGGFFPPLVITYVA), and 353 to 373 (LTGSSHLAFIFLAVFGCIALF).

It belongs to the major facilitator superfamily. Nitrate/nitrite porter (TC 2.A.1.8) family.

The protein localises to the cell membrane. Functionally, probably required for nitrate uptake under anoxic conditions. Also possibly involved in excretion of nitrite produced by the dissimilatory reduction of nitrate. The protein is Probable nitrate transporter NarT (narT) of Staphylococcus aureus (strain bovine RF122 / ET3-1).